Here is a 201-residue protein sequence, read N- to C-terminus: ATP-dependent Clp protease proteolytic subunit (201 aa).

Ser-105 serves as the catalytic Nucleophile. Residue His-130 is part of the active site.

Belongs to the peptidase S14 family. Fourteen ClpP subunits assemble into 2 heptameric rings which stack back to back to give a disk-like structure with a central cavity, resembling the structure of eukaryotic proteasomes.

The protein localises to the cytoplasm. It catalyses the reaction Hydrolysis of proteins to small peptides in the presence of ATP and magnesium. alpha-casein is the usual test substrate. In the absence of ATP, only oligopeptides shorter than five residues are hydrolyzed (such as succinyl-Leu-Tyr-|-NHMec, and Leu-Tyr-Leu-|-Tyr-Trp, in which cleavage of the -Tyr-|-Leu- and -Tyr-|-Trp bonds also occurs).. Cleaves peptides in various proteins in a process that requires ATP hydrolysis. Has a chymotrypsin-like activity. Plays a major role in the degradation of misfolded proteins. This chain is ATP-dependent Clp protease proteolytic subunit, found in Aquifex aeolicus (strain VF5).